The following is a 629-amino-acid chain: tRNA uridine 5-carboxymethylaminomethyl modification enzyme MnmG (629 aa).

FAD-binding positions include 13 to 18 (GGGHAG), valine 125, and serine 180. 273–287 (GPRYCPSIEDKVMRF) contributes to the NAD(+) binding site. Glutamine 370 contributes to the FAD binding site.

The protein belongs to the MnmG family. As to quaternary structure, homodimer. Heterotetramer of two MnmE and two MnmG subunits. Requires FAD as cofactor.

The protein resides in the cytoplasm. Functionally, NAD-binding protein involved in the addition of a carboxymethylaminomethyl (cmnm) group at the wobble position (U34) of certain tRNAs, forming tRNA-cmnm(5)s(2)U34. This Klebsiella pneumoniae subsp. pneumoniae (strain ATCC 700721 / MGH 78578) protein is tRNA uridine 5-carboxymethylaminomethyl modification enzyme MnmG.